A 461-amino-acid polypeptide reads, in one-letter code: Bifunctional protein GlmU (461 aa).

A pyrophosphorylase region spans residues 1–229 (MEKYVVVLAA…FSESLGVNDR (229 aa)). UDP-N-acetyl-alpha-D-glucosamine contacts are provided by residues 8–11 (LAAG), lysine 22, glutamine 72, and 77–78 (GT). Aspartate 102 contacts Mg(2+). UDP-N-acetyl-alpha-D-glucosamine contacts are provided by glycine 139, glutamate 154, asparagine 169, and asparagine 227. A Mg(2+)-binding site is contributed by asparagine 227. The tract at residues 230 to 250 (IALAEATRIMQRRINEGHMRD) is linker. Residues 251-461 (GVTFIDPATA…LPLSEDEEWK (211 aa)) form an N-acetyltransferase region. UDP-N-acetyl-alpha-D-glucosamine-binding residues include arginine 332 and lysine 350. Residue histidine 362 is the Proton acceptor of the active site. 2 residues coordinate UDP-N-acetyl-alpha-D-glucosamine: tyrosine 365 and asparagine 376. Acetyl-CoA contacts are provided by alanine 422 and arginine 439.

The protein in the N-terminal section; belongs to the N-acetylglucosamine-1-phosphate uridyltransferase family. In the C-terminal section; belongs to the transferase hexapeptide repeat family. Homotrimer. The cofactor is Mg(2+).

The protein resides in the cytoplasm. It catalyses the reaction alpha-D-glucosamine 1-phosphate + acetyl-CoA = N-acetyl-alpha-D-glucosamine 1-phosphate + CoA + H(+). The catalysed reaction is N-acetyl-alpha-D-glucosamine 1-phosphate + UTP + H(+) = UDP-N-acetyl-alpha-D-glucosamine + diphosphate. It participates in nucleotide-sugar biosynthesis; UDP-N-acetyl-alpha-D-glucosamine biosynthesis; N-acetyl-alpha-D-glucosamine 1-phosphate from alpha-D-glucosamine 6-phosphate (route II): step 2/2. The protein operates within nucleotide-sugar biosynthesis; UDP-N-acetyl-alpha-D-glucosamine biosynthesis; UDP-N-acetyl-alpha-D-glucosamine from N-acetyl-alpha-D-glucosamine 1-phosphate: step 1/1. It functions in the pathway bacterial outer membrane biogenesis; LPS lipid A biosynthesis. Its function is as follows. Catalyzes the last two sequential reactions in the de novo biosynthetic pathway for UDP-N-acetylglucosamine (UDP-GlcNAc). The C-terminal domain catalyzes the transfer of acetyl group from acetyl coenzyme A to glucosamine-1-phosphate (GlcN-1-P) to produce N-acetylglucosamine-1-phosphate (GlcNAc-1-P), which is converted into UDP-GlcNAc by the transfer of uridine 5-monophosphate (from uridine 5-triphosphate), a reaction catalyzed by the N-terminal domain. This chain is Bifunctional protein GlmU, found in Lactobacillus delbrueckii subsp. bulgaricus (strain ATCC BAA-365 / Lb-18).